The sequence spans 739 residues: Adhesion G protein-coupled receptor L4 (739 aa).

Residues 1 to 19 form the signal peptide; that stretch reads MRLLPLLVGFSTLLNCSYT. Residues 20 to 57 form the EGF-like 1 domain; sequence QNCSKTTCLPNAKCEVHNGVEACFCSQGYSGNGVTICE. Residues 20-481 are Extracellular-facing; sequence QNCSKTTCLP…DYNILTRITQ (462 aa). Asn21 is a glycosylation site (N-linked (GlcNAc...) asparagine). 9 disulfides stabilise this stretch: Cys22–Cys33, Cys27–Cys42, Cys44–Cys56, Cys62–Cys74, Cys68–Cys83, Cys85–Cys106, Cys112–Cys124, Cys118–Cys133, and Cys135–Cys156. The EGF-like 2; calcium-binding domain occupies 58 to 107; it reads DIDECSESSVCGDHAVCENVNGGFSCFCREGYQTATGKSQFTPNDGSYCQ. In terms of domain architecture, EGF-like 3; calcium-binding spans 108-157; that stretch reads DIDECSESSVCGDHAVCENVNGGFSCFCREGYQTATGKSQFTPNDGSYCQ. 7 N-linked (GlcNAc...) asparagine glycosylation sites follow: Asn176, Asn226, Asn237, Asn298, Asn422, Asn430, and Asn444. A GAIN-B domain is found at 293–468; it reads SQFDMNSTDL…AILMSSTSSI (176 aa). Disulfide bonds link Cys418–Cys450 and Cys438–Cys452. The interval 418-468 is GPS; that stretch reads CAFWNYSVDAMNNGSWSTEGCELTHSNDTHTSCRCSHLTHFAILMSSTSSI. Residues 482 to 502 traverse the membrane as a helical segment; sequence LGIIISLICLAICIFTFWFFS. At 503-513 the chain is on the cytoplasmic side; that stretch reads EIQSTRTTIHK. Residues 514-534 form a helical membrane-spanning segment; sequence NLCCSLFLAELVFLIGININT. The Extracellular segment spans residues 535 to 548; it reads NKLVCSIIAGLLHY. Residues 549 to 569 form a helical membrane-spanning segment; sequence FFLAAFAWMCIEGIHLYLIVV. Residues 570-581 lie on the Cytoplasmic side of the membrane; that stretch reads GVIYNKGFLHKN. A helical transmembrane segment spans residues 582–602; it reads FYIFGYLSPAVVVGFSASLGY. Over 603-622 the chain is Extracellular; the sequence is RYYGTTKVCWLSTENNFIWS. The helical transmembrane segment at 623-643 threads the bilayer; sequence FIGPACLIILVNLLAFGVIIY. Topologically, residues 644–667 are cytoplasmic; that stretch reads KVFRHTAGLKPEVSCYENIRSCAR. Residues 668 to 688 traverse the membrane as a helical segment; it reads GALALLFLLGTTWIFGVLHVV. Over 689–695 the chain is Extracellular; it reads HASVVTA. The chain crosses the membrane as a helical span at residues 696 to 716; sequence YLFTVSNAFQGMFIFLFLCVL. Residues 717 to 739 lie on the Cytoplasmic side of the membrane; it reads SRKIQEEYYRLFKNVPCCFGCLR.

It belongs to the G-protein coupled receptor 2 family. Adhesion G-protein coupled receptor (ADGR) subfamily. In terms of assembly, heterodimer of 2 chains generated by proteolytic processing; the large extracellular N-terminal fragment and the membrane-bound C-terminal fragment predominantly remain associated and non-covalently linked. Post-translationally, glycosylated. In terms of processing, proteolytically cleaved into 2 subunits, an extracellular alpha subunit and a seven-transmembrane subunit.

The protein localises to the cell membrane. In terms of biological role, endothelial orphan receptor that acts as a key regulator of angiogenesis. The sequence is that of Adhesion G protein-coupled receptor L4 (Adgrl4) from Mus musculus (Mouse).